The primary structure comprises 325 residues: Putative carboxypeptidase YocD (325 aa).

Ser111 acts as the Nucleophile in catalysis. Active-site charge relay system residues include Glu228 and His296.

This sequence belongs to the peptidase S66 family.

The chain is Putative carboxypeptidase YocD (yocD) from Bacillus subtilis (strain 168).